Consider the following 570-residue polypeptide: Phosphoenolpyruvate-protein phosphotransferase (570 aa).

Catalysis depends on histidine 189, which acts as the Tele-phosphohistidine intermediate. Positions 296 and 332 each coordinate phosphoenolpyruvate. Positions 431 and 455 each coordinate Mg(2+). Phosphoenolpyruvate contacts are provided by residues 454-455 (ND) and arginine 465. Cysteine 502 acts as the Proton donor in catalysis.

Belongs to the PEP-utilizing enzyme family. As to quaternary structure, homodimer. Interacts with FloT. Mg(2+) serves as cofactor.

It localises to the cytoplasm. The protein localises to the membrane raft. The enzyme catalyses L-histidyl-[protein] + phosphoenolpyruvate = N(pros)-phospho-L-histidyl-[protein] + pyruvate. Its function is as follows. General (non sugar-specific) component of the phosphoenolpyruvate-dependent sugar phosphotransferase system (sugar PTS). This major carbohydrate active-transport system catalyzes the phosphorylation of incoming sugar substrates concomitantly with their translocation across the cell membrane. Enzyme I transfers the phosphoryl group from phosphoenolpyruvate (PEP) to the phosphoryl carrier protein (HPr). The sequence is that of Phosphoenolpyruvate-protein phosphotransferase (ptsI) from Bacillus subtilis (strain 168).